Reading from the N-terminus, the 312-residue chain is Ribosomal RNA small subunit methyltransferase H (312 aa).

Residues 35-37 (GGH), aspartate 55, aspartate 101, and glutamine 108 contribute to the S-adenosyl-L-methionine site. Positions 285-306 (ALKPSEHEVTENSRSRSSVLRV) are disordered. The segment covering 287-298 (KPSEHEVTENSR) has biased composition (basic and acidic residues).

This sequence belongs to the methyltransferase superfamily. RsmH family.

The protein localises to the cytoplasm. The catalysed reaction is cytidine(1402) in 16S rRNA + S-adenosyl-L-methionine = N(4)-methylcytidine(1402) in 16S rRNA + S-adenosyl-L-homocysteine + H(+). Specifically methylates the N4 position of cytidine in position 1402 (C1402) of 16S rRNA. The chain is Ribosomal RNA small subunit methyltransferase H from Aeromonas salmonicida (strain A449).